The chain runs to 114 residues: uncharacterized protein (114 aa).

The span at 1-20 (MGLSRWHDKNSRPAEEKSEE) shows a compositional bias: basic and acidic residues. The disordered stretch occupies residues 1–22 (MGLSRWHDKNSRPAEEKSEEMQ).

Its function is as follows. May be involved in phosphatase regulation and/or generation of precursor metabolites and energy. This is an uncharacterized protein from Saccharomyces cerevisiae (strain ATCC 204508 / S288c) (Baker's yeast).